The primary structure comprises 462 residues: Tubulin alpha-4 chain (462 aa).

GTP contacts are provided by glutamine 11, glutamate 82, serine 151, glycine 155, threonine 156, threonine 190, asparagine 217, and asparagine 239. Residue glutamate 82 coordinates Mg(2+). The active site involves glutamate 265.

This sequence belongs to the tubulin family. In terms of assembly, dimer of alpha and beta chains. A typical microtubule is a hollow water-filled tube with an outer diameter of 25 nm and an inner diameter of 15 nM. Alpha-beta heterodimers associate head-to-tail to form protofilaments running lengthwise along the microtubule wall with the beta-tubulin subunit facing the microtubule plus end conferring a structural polarity. Microtubules usually have 13 protofilaments but different protofilament numbers can be found in some organisms and specialized cells. It depends on Mg(2+) as a cofactor.

The protein localises to the cytoplasm. Its subcellular location is the cytoskeleton. The enzyme catalyses GTP + H2O = GDP + phosphate + H(+). Functionally, tubulin is the major constituent of microtubules, a cylinder consisting of laterally associated linear protofilaments composed of alpha- and beta-tubulin heterodimers. Microtubules grow by the addition of GTP-tubulin dimers to the microtubule end, where a stabilizing cap forms. Below the cap, tubulin dimers are in GDP-bound state, owing to GTPase activity of alpha-tubulin. This Drosophila melanogaster (Fruit fly) protein is Tubulin alpha-4 chain (alphaTub67C).